Reading from the N-terminus, the 834-residue chain is Periplasmic nitrate reductase (834 aa).

The segment at residues 1–31 (MSSELTRRNLLKAHAAGIAAATAGIALPAAA) is a signal peptide (tat-type signal). The region spanning 43–99 (IKWSKAPCRFCGTGCGVMVGVKEGKVVATHGDMQAEVNRGLNCIKGYFLSKIMYGKD) is the 4Fe-4S Mo/W bis-MGD-type domain. [4Fe-4S] cluster is bound by residues C50, C53, C57, and C85. Mo-bis(molybdopterin guanine dinucleotide) is bound by residues K87, Q154, N179, C183, 216–223 (WGSNMAEM), 247–251 (STFTH), 266–268 (GTD), M377, Q381, N487, 513–514 (SD), K536, D563, and 723–732 (TGRVLEHWHS). A substrate-binding site is contributed by W799. Mo-bis(molybdopterin guanine dinucleotide) contacts are provided by N807 and K824.

Belongs to the prokaryotic molybdopterin-containing oxidoreductase family. NasA/NapA/NarB subfamily. Component of the periplasmic nitrate reductase NapAB complex composed of NapA and NapB. [4Fe-4S] cluster is required as a cofactor. The cofactor is Mo-bis(molybdopterin guanine dinucleotide). Post-translationally, predicted to be exported by the Tat system. The position of the signal peptide cleavage has not been experimentally proven.

Its subcellular location is the periplasm. It carries out the reaction 2 Fe(II)-[cytochrome] + nitrate + 2 H(+) = 2 Fe(III)-[cytochrome] + nitrite + H2O. Catalytic subunit of the periplasmic nitrate reductase complex NapAB. Receives electrons from NapB and catalyzes the reduction of nitrate to nitrite. In Agrobacterium fabrum (strain C58 / ATCC 33970) (Agrobacterium tumefaciens (strain C58)), this protein is Periplasmic nitrate reductase.